We begin with the raw amino-acid sequence, 365 residues long: Protein RecA (365 aa).

An ATP-binding site is contributed by 73–80; sequence GPESSGKT.

Belongs to the RecA family.

The protein resides in the cytoplasm. Its function is as follows. Can catalyze the hydrolysis of ATP in the presence of single-stranded DNA, the ATP-dependent uptake of single-stranded DNA by duplex DNA, and the ATP-dependent hybridization of homologous single-stranded DNAs. It interacts with LexA causing its activation and leading to its autocatalytic cleavage. The sequence is that of Protein RecA from Prochlorococcus marinus (strain AS9601).